The sequence spans 320 residues: Myeloid-associated differentiation marker (320 aa).

2 MARVEL domains span residues 25–157 (ALTQ…ARPG) and 162–317 (YMAT…RLVF). A run of 8 helical transmembrane segments spans residues 35 to 55 (LLQL…GAWT), 61 to 81 (WAMF…IVEL), 95 to 115 (FPIT…IIYP), 131 to 151 (AIAA…EVAW), 165 to 185 (TVPG…FAFI), 197 to 217 (LEWC…TILL), 233 to 253 (FLSG…VLWP), and 292 to 312 (LAVS…LVYS).

The protein belongs to the MAL family.

It localises to the membrane. This chain is Myeloid-associated differentiation marker (Myadm), found in Mus musculus (Mouse).